Consider the following 260-residue polypeptide: Adenosine 5'-phosphosulfate reductase (260 aa).

Residues C130, C131, C213, and C216 each contribute to the [4Fe-4S] cluster site. C241 (nucleophile; cysteine thiosulfonate intermediate) is an active-site residue.

It belongs to the PAPS reductase family. CysH subfamily. The cofactor is [4Fe-4S] cluster.

It localises to the cytoplasm. It catalyses the reaction [thioredoxin]-disulfide + sulfite + AMP + 2 H(+) = adenosine 5'-phosphosulfate + [thioredoxin]-dithiol. The protein operates within sulfur metabolism; hydrogen sulfide biosynthesis; sulfite from sulfate. Its function is as follows. Catalyzes the formation of sulfite from adenosine 5'-phosphosulfate (APS) using thioredoxin as an electron donor. This chain is Adenosine 5'-phosphosulfate reductase, found in Agrobacterium fabrum (strain C58 / ATCC 33970) (Agrobacterium tumefaciens (strain C58)).